Reading from the N-terminus, the 715-residue chain is ATP-dependent zinc metalloprotease YME1L1 (715 aa).

Residues 1–237 (MFSLSSTVQP…TNDSLRRTRL (237 aa)) lie on the Mitochondrial matrix side of the membrane. A disordered region spans residues 34 to 54 (NTPVSQKQHRDTVPEHEAPSS). The span at 41 to 52 (QHRDTVPEHEAP) shows a compositional bias: basic and acidic residues. The chain crosses the membrane as a helical span at residues 238–258 (ILFVLLLFGIYGLLKNPFLSV). Residues 259-715 (RFRTTTGLDS…VLEGKKLEVR (457 aa)) lie on the Mitochondrial intermembrane side of the membrane. Residues V283, T325, G326, K327, T328, and L329 each contribute to the ATP site. Residue H541 participates in Zn(2+) binding. The active site involves E542. 2 residues coordinate Zn(2+): H545 and D619.

In the N-terminal section; belongs to the AAA ATPase family. The protein in the C-terminal section; belongs to the peptidase M41 family. As to quaternary structure, homohexamer; may also form heterohexamers. Exists in several complexes of 600-1100 kDa. Interacts with AFG1L. Requires Zn(2+) as cofactor. Proteolytically processed by mitochondrial processing peptidase (MPP) to generate the mature form. Degraded in an OMA1-dependent manner in response to oxidative stress. Detected in heart and skeletal muscle (at protein level).

It localises to the mitochondrion inner membrane. The protein localises to the mitochondrion. The catalysed reaction is ATP + H2O = ADP + phosphate + H(+). ATP-dependent metalloprotease that catalyzes the degradation of folded and unfolded proteins with a suitable degron sequence in the mitochondrial intermembrane region. Plays an important role in regulating mitochondrial morphology and function by cleaving OPA1 at position S2, giving rise to a form of OPA1 that promotes maintenance of normal mitochondrial structure and mitochondrial protein metabolism. Ensures cell proliferation, maintains normal cristae morphology and complex I respiration activity, promotes antiapoptotic activity and protects mitochondria from the accumulation of oxidatively damaged membrane proteins. Required to control the accumulation of nonassembled respiratory chain subunits (NDUFB6, OX4 and ND1). Involved in the mitochondrial adaptation in response to various signals, such as stress or developmental cues, by mediating degradation of mitochondrial proteins to rewire the mitochondrial proteome. Catalyzes degradation of mitochondrial proteins, such as translocases, lipid transfer proteins and metabolic enzymes in response to nutrient starvation in order to limit mitochondrial biogenesis: mechanistically, YME1L is activated by decreased phosphatidylethanolamine levels caused by LPIN1 activity in response to mTORC1 inhibition. Acts as a regulator of adult neural stem cell self-renewal by promoting mitochondrial proteome rewiring, preserving neural stem and progenitor cells self-renewal. Required for normal, constitutive degradation of PRELID1. Catalyzes the degradation of OMA1 in response to membrane depolarization. Mediates degradation of TIMM17A downstream of the integrated stress response (ISR). Catalyzes degradation of MICU1 when MICU1 is not assembled via an interchain disulfide. The sequence is that of ATP-dependent zinc metalloprotease YME1L1 (Yme1l1) from Mus musculus (Mouse).